A 91-amino-acid chain; its full sequence is Small ribosomal subunit protein bS16 (91 aa).

Belongs to the bacterial ribosomal protein bS16 family.

The polypeptide is Small ribosomal subunit protein bS16 (Staphylococcus aureus (strain Mu3 / ATCC 700698)).